The primary structure comprises 299 residues: ATP phosphoribosyltransferase (299 aa).

This sequence belongs to the ATP phosphoribosyltransferase family. Long subfamily. Mg(2+) is required as a cofactor.

The protein resides in the cytoplasm. It catalyses the reaction 1-(5-phospho-beta-D-ribosyl)-ATP + diphosphate = 5-phospho-alpha-D-ribose 1-diphosphate + ATP. It participates in amino-acid biosynthesis; L-histidine biosynthesis; L-histidine from 5-phospho-alpha-D-ribose 1-diphosphate: step 1/9. With respect to regulation, feedback inhibited by histidine. Its function is as follows. Catalyzes the condensation of ATP and 5-phosphoribose 1-diphosphate to form N'-(5'-phosphoribosyl)-ATP (PR-ATP). Has a crucial role in the pathway because the rate of histidine biosynthesis seems to be controlled primarily by regulation of HisG enzymatic activity. The polypeptide is ATP phosphoribosyltransferase (Shewanella sp. (strain MR-7)).